Reading from the N-terminus, the 141-residue chain is HTH-type transcriptional repressor NsrR (141 aa).

Residues 2-129 (QLTNFTDFGL…DKHTIQDMLT (128 aa)) enclose the HTH rrf2-type domain. Positions 28-51 (ITVVTETFDVSRNHMVKIINKLGQ) form a DNA-binding region, H-T-H motif. The [2Fe-2S] cluster site is built by Cys-91, Cys-96, and Cys-102.

Requires [2Fe-2S] cluster as cofactor.

Functionally, nitric oxide-sensitive repressor of genes involved in protecting the cell against nitrosative stress. May require iron for activity. The protein is HTH-type transcriptional repressor NsrR of Aliivibrio fischeri (strain ATCC 700601 / ES114) (Vibrio fischeri).